Reading from the N-terminus, the 481-residue chain is Ankyrin repeat, SAM and basic leucine zipper domain-containing protein 1 (481 aa).

Positions 1 to 10 are enriched in low complexity; the sequence is MASGALRGLA. Residues 1–23 form a disordered region; it reads MASGALRGLAVAGGGESSDSEDD. Phosphoserine is present on residues Ser-17, Ser-18, and Ser-20. ANK repeat units follow at residues 45–74, 78–107, 110–144, 148–177, 181–210, and 214–243; these read EKSETFKKALTTGDISLVQELLDSGISVDS, YGWTPLMYAASIANVELVRVLLNRGANASF, DKQTILITACSARGSEEQILKCVELLLSRNADPNI, RLMTPIMYAARDGHPQVVALLVAHGAEVNA, NGYTALTWAARQGHKNVVLKLLELGANKML, and DGKIPSEIAKRNKHLEIFNFLSLTLNPLEG. The SAM domain maps to 272–334; that stretch reads SYTAFGDLEI…KILSALKELE (63 aa).

In terms of assembly, interacts with DDX4, PIWIL1, RANBP9 and TDRD1.

It localises to the cytoplasm. Its function is as follows. Plays a central role during spermatogenesis by repressing transposable elements and preventing their mobilization, which is essential for the germline integrity. Acts via the piRNA metabolic process, which mediates the repression of transposable elements during meiosis by forming complexes composed of piRNAs and Piwi proteins and governs the methylation and subsequent repression of transposons. Its association with pi-bodies suggests a participation in the primary piRNAs metabolic process. Required prior to the pachytene stage to facilitate the production of multiple types of piRNAs, including those associated with repeats involved in the regulation of retrotransposons. May act by mediating protein-protein interactions during germ cell maturation. This chain is Ankyrin repeat, SAM and basic leucine zipper domain-containing protein 1 (ASZ1), found in Eulemur macaco macaco (Black lemur).